The following is a 306-amino-acid chain: Ribosomal protein L11 methyltransferase (306 aa).

4 residues coordinate S-adenosyl-L-methionine: Thr154, Gly179, Asp201, and Asn242.

The protein belongs to the methyltransferase superfamily. PrmA family.

Its subcellular location is the cytoplasm. It catalyses the reaction L-lysyl-[protein] + 3 S-adenosyl-L-methionine = N(6),N(6),N(6)-trimethyl-L-lysyl-[protein] + 3 S-adenosyl-L-homocysteine + 3 H(+). In terms of biological role, methylates ribosomal protein L11. The protein is Ribosomal protein L11 methyltransferase of Xanthomonas campestris pv. campestris (strain 8004).